Reading from the N-terminus, the 219-residue chain is Cytidylate kinase (219 aa).

Gly-11–Ala-19 lines the ATP pocket.

This sequence belongs to the cytidylate kinase family. Type 1 subfamily.

It is found in the cytoplasm. It carries out the reaction CMP + ATP = CDP + ADP. The catalysed reaction is dCMP + ATP = dCDP + ADP. This chain is Cytidylate kinase, found in Mesoplasma florum (strain ATCC 33453 / NBRC 100688 / NCTC 11704 / L1) (Acholeplasma florum).